Reading from the N-terminus, the 413-residue chain is Histidine--tRNA ligase (413 aa).

The protein belongs to the class-II aminoacyl-tRNA synthetase family. In terms of assembly, homodimer.

It localises to the cytoplasm. It catalyses the reaction tRNA(His) + L-histidine + ATP = L-histidyl-tRNA(His) + AMP + diphosphate + H(+). The polypeptide is Histidine--tRNA ligase (Ehrlichia chaffeensis (strain ATCC CRL-10679 / Arkansas)).